A 389-amino-acid polypeptide reads, in one-letter code: NADH-quinone oxidoreductase subunit D (389 aa).

The protein belongs to the complex I 49 kDa subunit family. As to quaternary structure, NDH-1 is composed of 14 different subunits. Subunits NuoB, C, D, E, F, and G constitute the peripheral sector of the complex.

It is found in the cell inner membrane. It catalyses the reaction a quinone + NADH + 5 H(+)(in) = a quinol + NAD(+) + 4 H(+)(out). NDH-1 shuttles electrons from NADH, via FMN and iron-sulfur (Fe-S) centers, to quinones in the respiratory chain. The immediate electron acceptor for the enzyme in this species is believed to be ubiquinone. Couples the redox reaction to proton translocation (for every two electrons transferred, four hydrogen ions are translocated across the cytoplasmic membrane), and thus conserves the redox energy in a proton gradient. This Rickettsia typhi (strain ATCC VR-144 / Wilmington) protein is NADH-quinone oxidoreductase subunit D.